Reading from the N-terminus, the 369-residue chain is Methionine import ATP-binding protein MetN 1 (369 aa).

The region spanning Ile-29–Leu-265 is the ABC transporter domain. Gly-62–Ser-69 lines the ATP pocket.

The protein belongs to the ABC transporter superfamily. Methionine importer (TC 3.A.1.24) family. As to quaternary structure, the complex is composed of two ATP-binding proteins (MetN), two transmembrane proteins (MetI) and a solute-binding protein (MetQ).

It localises to the cell inner membrane. It carries out the reaction L-methionine(out) + ATP + H2O = L-methionine(in) + ADP + phosphate + H(+). The enzyme catalyses D-methionine(out) + ATP + H2O = D-methionine(in) + ADP + phosphate + H(+). Functionally, part of the ABC transporter complex MetNIQ involved in methionine import. Responsible for energy coupling to the transport system. The protein is Methionine import ATP-binding protein MetN 1 of Pseudomonas aeruginosa (strain ATCC 15692 / DSM 22644 / CIP 104116 / JCM 14847 / LMG 12228 / 1C / PRS 101 / PAO1).